A 156-amino-acid chain; its full sequence is Cyanate hydratase (156 aa).

Catalysis depends on residues R96, E99, and S122.

The protein belongs to the cyanase family.

The enzyme catalyses cyanate + hydrogencarbonate + 3 H(+) = NH4(+) + 2 CO2. Functionally, catalyzes the reaction of cyanate with bicarbonate to produce ammonia and carbon dioxide. This is Cyanate hydratase from Burkholderia ambifaria (strain MC40-6).